Reading from the N-terminus, the 407-residue chain is Multifunctional CCA protein (407 aa).

ATP is bound by residues Gly8 and Arg11. Residues Gly8 and Arg11 each contribute to the CTP site. Mg(2+) contacts are provided by Asp21 and Asp23. 3 residues coordinate ATP: Arg91, Arg137, and Arg140. Residues Arg91, Arg137, and Arg140 each coordinate CTP. Positions 228–329 constitute an HD domain; it reads TGIHTLMVAQ…IKIFDKMDVW (102 aa).

It belongs to the tRNA nucleotidyltransferase/poly(A) polymerase family. Bacterial CCA-adding enzyme type 1 subfamily. In terms of assembly, monomer. Can also form homodimers and oligomers. Mg(2+) is required as a cofactor. It depends on Ni(2+) as a cofactor.

It catalyses the reaction a tRNA precursor + 2 CTP + ATP = a tRNA with a 3' CCA end + 3 diphosphate. It carries out the reaction a tRNA with a 3' CCA end + 2 CTP + ATP = a tRNA with a 3' CCACCA end + 3 diphosphate. Functionally, catalyzes the addition and repair of the essential 3'-terminal CCA sequence in tRNAs without using a nucleic acid template. Adds these three nucleotides in the order of C, C, and A to the tRNA nucleotide-73, using CTP and ATP as substrates and producing inorganic pyrophosphate. tRNA 3'-terminal CCA addition is required both for tRNA processing and repair. Also involved in tRNA surveillance by mediating tandem CCA addition to generate a CCACCA at the 3' terminus of unstable tRNAs. While stable tRNAs receive only 3'-terminal CCA, unstable tRNAs are marked with CCACCA and rapidly degraded. The protein is Multifunctional CCA protein of Aliivibrio fischeri (strain ATCC 700601 / ES114) (Vibrio fischeri).